The primary structure comprises 190 residues: Bifunctional D-Ala-D-Ala dipeptidase and D-Ala-D-Ala carboxypeptidase VanXYC (190 aa).

E66 provides a ligand contact to Mg(2+). A dipeptide-binding residues include Q67, A88, S93, H95, and D102. Cu(2+) contacts are provided by H95 and D102. Zn(2+) is bound by residues H95 and D102. E153 serves as the catalytic catalytic acid/base residue. Residues W155 and H156 each contribute to the a dipeptide site. Residue H156 coordinates Cu(2+). Residue H156 participates in Zn(2+) binding.

It belongs to the peptidase M15D family. In terms of assembly, homodimer.

The protein localises to the cytoplasm. It carries out the reaction D-alanyl-D-alanine + H2O = 2 D-alanine. The enzyme catalyses UDP-N-acetyl-alpha-D-muramoyl-L-alanyl-gamma-D-glutamyl-L-lysyl-D-alanyl-D-alanine + H2O = UDP-N-acetyl-alpha-D-muramoyl-L-alanyl-gamma-D-glutamyl-L-lysyl-D-alanine + D-alanine. Bifunctional enzyme, exhibiting dipeptidase and carboxypeptidase activities. Catalyzes hydrolysis of the D-alanyl-D-alanine dipeptide. Cleaves the C-terminal D-alanine residue of UDP-muramyl-pentapeptide[Ala] (UDP-MurNAc-L-Ala-D-Glu-L-Lys-D-Ala-D-Ala). Shows no activity against the pentapeptide with a C-terminal D-serine residue. Together with VanC/VanC1 and VanT, required for vancomycin resistance in E.gallinarum strain BM4174. In Enterococcus gallinarum, this protein is Bifunctional D-Ala-D-Ala dipeptidase and D-Ala-D-Ala carboxypeptidase VanXYC.